The chain runs to 185 residues: Mu-like prophage FluMu protein gp16 (185 aa).

The protein to phage Mu protein gp16.

In Haemophilus influenzae (strain ATCC 51907 / DSM 11121 / KW20 / Rd), this protein is Mu-like prophage FluMu protein gp16.